Consider the following 84-residue polypeptide: Apovitellenin-1 (84 aa).

The protein belongs to the apovitellenin family. As to quaternary structure, monomer.

Its function is as follows. Protein component of the very low density lipoprotein (VLDL) of egg-laying females. Potent lipoprotein lipase inhibitor, preventing the loss of triglycerides from VLDL on their way from the liver to the growing oocytes. The chain is Apovitellenin-1 from Dromaius novaehollandiae (Emu).